A 489-amino-acid polypeptide reads, in one-letter code: Adenylosuccinate synthetase 2, chloroplastic (489 aa).

The transit peptide at 1–54 directs the protein to the chloroplast; the sequence is MPLASLSLDPAPFPLIRPAAGWSGRVLPVPGPAPRLCRPLRAAPVAPATTDEPS. Residues 76–82 and 104–106 each bind GTP; these read GDEGKGK and GHT. Catalysis depends on Asp77, which acts as the Proton acceptor. Positions 77 and 104 each coordinate Mg(2+). IMP contacts are provided by residues 77-80, 102-105, Thr194, Arg208, Gln288, Thr303, and Arg367; these read DEGK and NAGH. The Proton donor role is filled by His105. 363-369 contacts substrate; that stretch reads TTTGRPR. Residues Arg369, 395 to 397, and 478 to 480 contribute to the GTP site; these read KLD and GVG.

It belongs to the adenylosuccinate synthetase family. Homodimer. Mg(2+) is required as a cofactor.

Its subcellular location is the plastid. The protein resides in the chloroplast. It carries out the reaction IMP + L-aspartate + GTP = N(6)-(1,2-dicarboxyethyl)-AMP + GDP + phosphate + 2 H(+). It functions in the pathway purine metabolism; AMP biosynthesis via de novo pathway; AMP from IMP: step 1/2. Its function is as follows. Plays an important role in the de novo pathway and in the salvage pathway of purine nucleotide biosynthesis. Catalyzes the first committed step in the biosynthesis of AMP from IMP. In Sorghum bicolor (Sorghum), this protein is Adenylosuccinate synthetase 2, chloroplastic.